We begin with the raw amino-acid sequence, 64 residues long: Probable tautomerase lp_1712 (64 aa).

P2 serves as the catalytic Proton acceptor; via imino nitrogen.

Belongs to the 4-oxalocrotonate tautomerase family.

The protein is Probable tautomerase lp_1712 of Lactiplantibacillus plantarum (strain ATCC BAA-793 / NCIMB 8826 / WCFS1) (Lactobacillus plantarum).